The sequence spans 304 residues: Putative S-adenosyl-L-methionine-dependent methyltransferase YktD (304 aa).

S-adenosyl-L-methionine contacts are provided by residues D134 and 163–164; that span reads DF.

This sequence belongs to the UPF0677 family.

Its function is as follows. May be involved in polyketide synthesis. The chain is Putative S-adenosyl-L-methionine-dependent methyltransferase YktD (yktD) from Bacillus subtilis (strain 168).